Here is a 105-residue protein sequence, read N- to C-terminus: Nitrogenase-stabilizing/protective protein NifW 2 (105 aa).

This sequence belongs to the NifW family.

In terms of biological role, may protect the nitrogenase Fe-Mo protein from oxidative damage. This chain is Nitrogenase-stabilizing/protective protein NifW 2 (nifW2), found in Trichormus variabilis (strain ATCC 29413 / PCC 7937) (Anabaena variabilis).